A 253-amino-acid chain; its full sequence is Phosphate import ATP-binding protein PstB (253 aa).

The ABC transporter domain maps to 1–249 (MKLMDVRVSG…PRHELTKKFL (249 aa)). 38–45 (GPSGSGKS) is a binding site for ATP.

This sequence belongs to the ABC transporter superfamily. Phosphate importer (TC 3.A.1.7) family. In terms of assembly, the complex is composed of two ATP-binding proteins (PstB), two transmembrane proteins (PstC and PstA) and a solute-binding protein (PstS).

It localises to the cell membrane. The enzyme catalyses phosphate(out) + ATP + H2O = ADP + 2 phosphate(in) + H(+). Its function is as follows. Part of the ABC transporter complex PstSACB involved in phosphate import. Responsible for energy coupling to the transport system. In Aeropyrum pernix (strain ATCC 700893 / DSM 11879 / JCM 9820 / NBRC 100138 / K1), this protein is Phosphate import ATP-binding protein PstB.